The primary structure comprises 1341 residues: Restriction of telomere capping protein 1 (1341 aa).

Residues 1–39 are disordered; that stretch reads MSLSPHVENASIPKGSTPIPKNRNVSSIGKGEFLGSSSS. WD repeat units lie at residues 207–248, 256–296, 305–342, 367–406, 439–486, and 489–527; these read NKFS…SIDN, EHTR…SKSS, TASDSIRDVKWMPGYNFASKNDQGSSTYGNLKSGYKFA, AHTGPGLCLNWHPNQEYIATGGRDGKCCLWFVGDNANAAE, NTGY…IPKH, and LSETPSLGLVWWDENLIFNIDKGTRINGWDINKEPTVLE. 5 disordered regions span residues 559-593, 600-619, 630-651, 736-765, and 789-830; these read PELQPTSSTTCKKHPGTIKNPKNGNPENQGIIGGI, TGLTSFTPERPPTLKAGPTF, ASSFNSSSASLTSLTPQTENRE, KNATETHGDNTTTTNNNDDGDDDDDDDDDD, and NEKV…DRAR. The segment covering 630-644 has biased composition (low complexity); it reads ASSFNSSSASLTSLT. The span at 753–765 shows a compositional bias: acidic residues; it reads DDGDDDDDDDDDD. Residues 814 to 823 are compositionally biased toward low complexity; that stretch reads SSISSISASR. The stretch at 843–883 is one WD 7 repeat; the sequence is KIQTLVDLISIATHNASVYLSIDDLTNFKIWILIRDSLLWD. Disordered stretches follow at residues 941–962 and 1013–1043; these read AFRANSDEPSDAEKKPVSKLKE and DEHEHQEEEQPHDSPTKSAQFHASPIAKSIP. 2 stretches are compositionally biased toward basic and acidic residues: residues 951-962 and 1015-1027; these read DAEKKPVSKLKE and HEHQEEEQPHDSP. Phosphoserine is present on residues serine 1036, serine 1080, serine 1087, serine 1089, serine 1123, and serine 1133. 2 WD repeats span residues 1129–1169 and 1216–1255; these read SRPD…KQLY and LFGIAADVLKYCPFEDIMGSEGDQSSIRLFCERCGELITN. The RING-type; degenerate zinc finger occupies 1293–1335; it reads CVLCERPLKKLTMVILPCGHEGHFQCIQEWFLDENEQECPGGC.

This sequence belongs to the WD repeat RTC1 family. As to quaternary structure, component of the SEA complex composed of at least IML1/SEA1, RTC1/SEA2, MTC5/SEA3, NPR2, NPR3, SEA4, SEC13 and SEH1. Interacts with ribosomes.

It is found in the vacuole membrane. Its function is as follows. Component of the SEA complex which coats the vacuolar membrane and is involved in intracellular trafficking, autophagy, response to nitrogen starvation, and amino acid biogenesis. May be involved in a process influencing telomere capping. The protein is Restriction of telomere capping protein 1 (RTC1) of Saccharomyces cerevisiae (strain ATCC 204508 / S288c) (Baker's yeast).